We begin with the raw amino-acid sequence, 288 residues long: MAATFFGEVVRTPCRAGTEEEEEEEDGNRETPEDREVRRQLARKREVRLFRRQTKTTLEVSLLEKHPCSKFIIAIGNNAVAFLSSFVMNSGAWEEVGCAKLWNEWCRTTDTAHLSPTEAFCVFYHLKSNPSVMLCQCSCYVAEDQQYQWLEKVFGSCPRKNMQVTILTCRHVTDYKTSESTSSLHTPFLKALKTQNFKEPPFCSLLEQPNIVHDLPAAVLSYCQVWRIPAVLYLCYTDVMKLDLITIEAFKPVLSSKSLKCLVKNIPQSTEILKKLMTTNEIQSNIYT.

N-acetylalanine is present on Ala-2. Residues 12 to 38 (TPCRAGTEEEEEEEDGNRETPEDREVR) form a disordered region. Residue Thr-18 is modified to Phosphothreonine. Over residues 28-38 (NRETPEDREVR) the composition is skewed to basic and acidic residues. A Phosphothreonine modification is found at Thr-54. The residue at position 180 (Ser-180) is a Phosphoserine. Lys-264 carries the post-translational modification N6-acetyllysine.

Belongs to the PSMG1 family. As to quaternary structure, forms a heterodimer with PSMG2. The PSMG1-PSMG2 heterodimer interacts directly with the PSMA5 and PSMA7 proteasome alpha subunits. In terms of processing, degraded by the proteasome upon completion of 20S proteasome maturation.

It localises to the cytoplasm. The protein resides in the endoplasmic reticulum. Functionally, chaperone protein which promotes assembly of the 20S proteasome as part of a heterodimer with PSMG2. The PSMG1-PSMG2 heterodimer binds to the PSMA5 and PSMA7 proteasome subunits, promotes assembly of the proteasome alpha subunits into the heteroheptameric alpha ring and prevents alpha ring dimerization. This is Proteasome assembly chaperone 1 from Bos taurus (Bovine).